We begin with the raw amino-acid sequence, 498 residues long: Pentatricopeptide repeat-containing protein At3g61360 (498 aa).

PPR repeat units lie at residues threonine 102–aspartate 132, serine 138–lysine 172, glycine 175–arginine 205, aspartate 209–proline 243, asparagine 244–isoleucine 278, threonine 279–proline 313, aspartate 314–proline 348, aspartate 349–proline 385, and lysine 386–proline 420.

This sequence belongs to the PPR family. P subfamily.

The protein is Pentatricopeptide repeat-containing protein At3g61360 of Arabidopsis thaliana (Mouse-ear cress).